Reading from the N-terminus, the 303-residue chain is Quinolinate synthase (303 aa).

The iminosuccinate site is built by His25 and Ser42. Residue Cys87 coordinates [4Fe-4S] cluster. Residues 113 to 115 (YVN) and Ser130 contribute to the iminosuccinate site. Residue Cys173 coordinates [4Fe-4S] cluster. Residues 199–201 (HPE) and Thr216 contribute to the iminosuccinate site. Position 261 (Cys261) interacts with [4Fe-4S] cluster.

It belongs to the quinolinate synthase family. Type 2 subfamily. It depends on [4Fe-4S] cluster as a cofactor.

The protein localises to the cytoplasm. The enzyme catalyses iminosuccinate + dihydroxyacetone phosphate = quinolinate + phosphate + 2 H2O + H(+). It functions in the pathway cofactor biosynthesis; NAD(+) biosynthesis; quinolinate from iminoaspartate: step 1/1. Its function is as follows. Catalyzes the condensation of iminoaspartate with dihydroxyacetone phosphate to form quinolinate. This Desulforudis audaxviator (strain MP104C) protein is Quinolinate synthase.